A 370-amino-acid chain; its full sequence is StAR-related lipid transfer protein 7, mitochondrial (370 aa).

Residues 1-58 (MLPRRLLAAWLAGTRGGGLLALLANQCRFVTGLRVRRAQQIAQLYGRLYSESSRRVLL) constitute a mitochondrion transit peptide. A coiled-coil region spans residues 86-111 (DEERIQEEELQRSINEMKRLEEMSNM). Disordered stretches follow at residues 111–138 (MFQSSGVQHHPPEPKAQTEGNEDSEGKE) and 343–370 (MSSEAKATSQSSERKNEGSCGPARIEYA). The START domain occupies 112 to 327 (FQSSGVQHHP…LHMATLKAKN (216 aa)).

Proteolytically cleaved by PARL. In terms of tissue distribution, expressed in nasal epithelial cells. Down-regulated in nasal epithelial cells in patients experiencing an asthma exacerbation as compared to stable asthmatics and healthy controls.

The protein resides in the mitochondrion. Functionally, may play a protective role in mucosal tissues by preventing exaggerated allergic responses. This chain is StAR-related lipid transfer protein 7, mitochondrial (STARD7), found in Homo sapiens (Human).